The following is a 101-amino-acid chain: A-type ATP synthase subunit K (101 aa).

The next 3 membrane-spanning stretches (helical) occupy residues 4 to 24, 32 to 52, and 75 to 95; these read ALLI…AAQA, FMGI…GAGV, and VLIF…FAVL.

This sequence belongs to the V-ATPase proteolipid subunit family. Has multiple subunits with at least A(3), B(3), C, D, E, F, H, I and proteolipid K(x).

It is found in the cell membrane. Functionally, component of the A-type ATP synthase that produces ATP from ADP in the presence of a proton gradient across the membrane. The polypeptide is A-type ATP synthase subunit K (Sulfolobus acidocaldarius (strain ATCC 33909 / DSM 639 / JCM 8929 / NBRC 15157 / NCIMB 11770)).